The primary structure comprises 243 residues: Small ribosomal subunit protein eS4 (243 aa).

Residues Ile43–Asn105 form the S4 RNA-binding domain.

The protein belongs to the eukaryotic ribosomal protein eS4 family. As to quaternary structure, part of the 30S ribosomal subunit.

The polypeptide is Small ribosomal subunit protein eS4 (Pyrococcus furiosus (strain ATCC 43587 / DSM 3638 / JCM 8422 / Vc1)).